Here is a 1836-residue protein sequence, read N- to C-terminus: InaD-like protein (1836 aa).

An L27 domain is found at Met-1–Ser-65. PDZ domains are found at residues Tyr-134 to Val-221, Asp-248 to Pro-328, and Asn-365 to Lys-453. Ser-455, Ser-459, and Ser-482 each carry phosphoserine. A compositionally biased stretch (polar residues) spans Leu-456 to Ser-466. Residues Leu-456–Glu-492 form a disordered region. Residues Asp-555–Leu-641 enclose the PDZ 4 domain. Position 647 is a phosphoserine (Ser-647). PDZ domains follow at residues Thr-687–Pro-773 and Pro-1074–Ser-1166. The span at Val-1173–Asn-1191 shows a compositional bias: polar residues. The interval Val-1173–Lys-1232 is disordered. Pro residues predominate over residues Ala-1203–Arg-1214. The residue at position 1217 (Ser-1217) is a Phosphoserine. Residues Asp-1219–Ala-1228 show a composition bias toward acidic residues. A PDZ 7 domain is found at Leu-1245 to Arg-1328. A disordered region spans residues Phe-1341 to Gln-1448. Residues Pro-1372–Asp-1383 show a composition bias toward basic and acidic residues. 2 stretches are compositionally biased toward polar residues: residues Tyr-1415 to Ile-1426 and Cys-1434 to Gln-1448. PDZ domains follow at residues Glu-1472–Arg-1555 and Val-1568–Arg-1650. A Phosphothreonine modification is found at Thr-1545. Residues Ala-1657–Arg-1678 form a disordered region. Positions Pro-1709–Ala-1795 constitute a PDZ 10 domain. The segment at Ser-1813 to Asp-1836 is disordered.

As to quaternary structure, forms a ternary complex with PALS1 and CRB1. Component of a complex whose core is composed of ARHGAP17, AMOT, PALS1, INADL/PATJ and PARD3/PAR3. Forms a heterotrimeric complex composed of MMP5, LIN7B and PATJ; the N-terminal L27 domain of PALS1 interacts with the L27 domain of PATJ and the C-terminal L27 domain of PALS1 interacts with the L27 domain of LIN7B. Component of a complex composed of CRB3, PALS1 and PATJ. As part of the Crumbs complex; interacts with WWP1, the interaction is enhanced by AMOTL2 and facilitates WWP1 localization to the plasma membrane. The Crumbs complex promotes monoubiquitination of AMOTL2 by WWP1, which activates the Hippo signaling pathway. Interacts (via N-terminus) with PALS1/PALS (via PDZ domain). Interacts with TJP3/ZO-3 and CLDN1/claudin-1. Interacts with ASIC3, KCNJ10, KCNJ15, GRIN2A, GRIN2B, GRIN2C, GRIN2D, NLGN2, and HTR2A. Interacts with MPP7. Directly interacts with HTR4. Interacts (via PDZ domain 8) with WWC1 (via the ADDV motif). Interacts with SLC6A4. Interacts (via C-terminus) with ARHGEF18. Interacts with NPHP1. Interacts with PARD3/PAR3. Interacts (via PDZ1-6 domains) with TJP1/ZO1; the interaction is required for attachment and extension of TJP1/ZO1 condensates along the apical cell interface. Abundantly expressed in germ cells, also expressed in testes and seminiferous tubules, with faint expression in Sertoli cells (at protein level).

It localises to the cell junction. The protein localises to the tight junction. The protein resides in the apical cell membrane. Its subcellular location is the cytoplasm. It is found in the perinuclear region. Functionally, scaffolding protein that facilitates the localization of proteins to the cell membrane. Required for the correct formation of tight junctions and epithelial apico-basal polarity. Acts (via its L27 domain) as an apical connector and elongation factor for multistranded TJP1/ZO1 condensates that form a tight junction belt, thereby required for the formation of the tight junction-mediated cell barrier. Positively regulates epithelial cell microtubule elongation and cell migration, possibly via facilitating localization of PRKCI/aPKC and PAR3D/PAR3 at the leading edge of migrating cells. Plays a role in the correct reorientation of the microtubule-organizing center during epithelial migration. May regulate the surface expression and/or function of ASIC3 in sensory neurons. May recruit ARHGEF18 to apical cell-cell boundaries. The protein is InaD-like protein of Rattus norvegicus (Rat).